Consider the following 109-residue polypeptide: uncharacterized protein (109 aa).

The next 2 membrane-spanning stretches (helical) occupy residues 19–39 (LELV…CLIP) and 53–73 (YFID…FYPF).

It localises to the membrane. This is an uncharacterized protein from Saccharomyces cerevisiae (strain ATCC 204508 / S288c) (Baker's yeast).